Consider the following 446-residue polypeptide: Na(+)-translocating NADH-quinone reductase subunit A (446 aa).

It belongs to the NqrA family. Composed of six subunits; NqrA, NqrB, NqrC, NqrD, NqrE and NqrF.

The catalysed reaction is a ubiquinone + n Na(+)(in) + NADH + H(+) = a ubiquinol + n Na(+)(out) + NAD(+). NQR complex catalyzes the reduction of ubiquinone-1 to ubiquinol by two successive reactions, coupled with the transport of Na(+) ions from the cytoplasm to the periplasm. NqrA to NqrE are probably involved in the second step, the conversion of ubisemiquinone to ubiquinol. The protein is Na(+)-translocating NADH-quinone reductase subunit A of Histophilus somni (strain 129Pt) (Haemophilus somnus).